The following is a 1050-amino-acid chain: FHIP family protein GE18198 (1050 aa).

Ser-498 and Ser-805 each carry phosphoserine. Disordered regions lie at residues 800–827 (KGNE…GQLR), 865–888 (TSMF…SASS), 911–954 (TDGR…SGSN), and 968–995 (SNTT…SEPA). Polar residues predominate over residues 808-826 (HHSQQQQMATNSGQQQGQL). The segment covering 872 to 888 (SASNTSTTPPNGSSASS) has biased composition (low complexity). Residues 918 to 935 (HAQTSAGTCETSLSTQPQ) show a composition bias toward polar residues. Residues 941 to 954 (TGAIATSATASGSN) show a composition bias toward low complexity. The span at 968 to 977 (SNTTTHSAST) shows a compositional bias: polar residues.

The protein belongs to the FHIP family.

The sequence is that of FHIP family protein GE18198 from Drosophila yakuba (Fruit fly).